The primary structure comprises 801 residues: Cadherin-20 (801 aa).

Residues 1–34 (MWTSGRMSNAKNWLGLGMSLYFWGLMDLTTTVLS) form the signal peptide. A propeptide spanning residues 35–59 (DTPTPQGELEALLSDKPQSHQRTKR) is cleaved from the precursor. At 60-619 (SWVWNQFFVL…AYMLPVSLSR (560 aa)) the chain is on the extracellular side. Cadherin domains lie at 61–165 (WVWN…EPKF), 166–274 (LDGP…PPRF), 275–389 (PQKH…PPVF), 390–494 (EPGF…APEF), and 494–610 (FPRF…SPEA). N-linked (GlcNAc...) asparagine glycosylation occurs at Asn-261. N-linked (GlcNAc...) asparagine glycans are attached at residues Asn-420, Asn-461, and Asn-542. The chain crosses the membrane as a helical span at residues 620–640 (GALIAILACIFVLLVLVLLIL). At 641–801 (SMRRHRKQPY…GASEGPAPLW (161 aa)) the chain is on the cytoplasmic side.

In terms of tissue distribution, expressed in placenta, adult brain, and fetal brain.

The protein localises to the cell membrane. In terms of biological role, cadherins are calcium-dependent cell adhesion proteins. They preferentially interact with themselves in a homophilic manner in connecting cells; cadherins may thus contribute to the sorting of heterogeneous cell types. The chain is Cadherin-20 (CDH20) from Homo sapiens (Human).